The primary structure comprises 317 residues: MKFLQSFPVILAVFSFAANLVSSKLVYEYETKYVTVEIVTIVSGETTYTTERLETNGPTSTTTTIVIPSSKPSSPESKPKSDSQPMFQSPSPVQITPSTTSINNAPSPTKPETTVTASPAVIAHTSVFVVTPNSAPTTSSSPPNIVQQVKAAITPSAPKPQPQPQPQENNSGTNDDSQLSSFSRQILEAHNIKRASHGVNPLTWSNELYNYANKVASSYDCSGNLRHTSGPYGENLALGYSSGANAVSAWYSEGFNFGGAGKLNHFTQVVWKSTTQLGCAYKDCRAKGWGLYIICNYQKPGNIIGQELANILPLIRS.

A signal peptide spans 1–23; it reads MKFLQSFPVILAVFSFAANLVSS. 2 disordered regions span residues 52-116 and 155-179; these read RLET…TTVT and PSAPKPQPQPQPQENNSGTNDDSQL. Residues 58 to 76 are compositionally biased toward low complexity; that stretch reads PTSTTTTIVIPSSKPSSPE. Composition is skewed to polar residues over residues 84-116 and 168-179; these read QPMFQSPSPVQITPSTTSINNAPSPTKPETTVT and ENNSGTNDDSQL. The N-linked (GlcNAc...) asparagine glycan is linked to Asn-169. In terms of domain architecture, SCP spans 187 to 297; sequence LEAHNIKRAS…GWGLYIICNY (111 aa).

Belongs to the CRISP family.

The protein localises to the secreted. Secreted protein that acts as a virulence factor during infections. In Candida albicans (strain SC5314 / ATCC MYA-2876) (Yeast), this protein is Probable pathogenesis-related protein CaO19.6200.